The chain runs to 494 residues: 3-octaprenyl-4-hydroxybenzoate carboxy-lyase (494 aa).

A Mn(2+)-binding site is contributed by Asn172. Prenylated FMN is bound by residues 175 to 177, 189 to 191, and 194 to 195; these read IYR, RWL, and RG. Glu238 provides a ligand contact to Mn(2+). The active-site Proton donor is the Asp287.

It belongs to the UbiD family. In terms of assembly, homohexamer. Requires prenylated FMN as cofactor. The cofactor is Mn(2+).

The protein resides in the cell membrane. The enzyme catalyses a 4-hydroxy-3-(all-trans-polyprenyl)benzoate + H(+) = a 2-(all-trans-polyprenyl)phenol + CO2. Its pathway is cofactor biosynthesis; ubiquinone biosynthesis. Functionally, catalyzes the decarboxylation of 3-octaprenyl-4-hydroxy benzoate to 2-octaprenylphenol, an intermediate step in ubiquinone biosynthesis. The protein is 3-octaprenyl-4-hydroxybenzoate carboxy-lyase of Escherichia coli O139:H28 (strain E24377A / ETEC).